Reading from the N-terminus, the 144-residue chain is Oxoglutarate dehydrogenase inhibitor (144 aa).

Thr14 bears the Phosphothreonine mark. The FHA domain maps to 68–117 (TAAGRHPDSDIFLDDVTVSRRHAEFRRNGDQYEVVDVGSLNGTYVNREPK).

The protein resides in the cytoplasm. Functionally, an essential component of the PknG signaling pathway. When unphosphorylated, it inhibits the activity of 2-oxoglutarate dehydrogenase. When phosphorylated it does not inhibit 2-oxoglutarate dehydrogenase. In Corynebacterium jeikeium (strain K411), this protein is Oxoglutarate dehydrogenase inhibitor (odhI).